Reading from the N-terminus, the 568-residue chain is Cyclin-dependent kinase-like 2 (568 aa).

The 286-residue stretch at 4 to 289 (YENLGLVGEG…CADLLRHDFF (286 aa)) folds into the Protein kinase domain. Residues 10–18 (VGEGSYGMV) and lysine 33 contribute to the ATP site. Positions 45–51 (KKIAMRE) match the [NKR]KIAxRE motif. The active-site Proton acceptor is aspartate 126. Disordered regions lie at residues 309-333 (DARNNSLPKKSQNRKKEKDDALGEE) and 545-568 (SHQGAGSPLSDDSEADLPRMEHQH). Residues 322–333 (RKKEKDDALGEE) are compositionally biased toward basic and acidic residues.

The protein belongs to the protein kinase superfamily. CMGC Ser/Thr protein kinase family. CDC2/CDKX subfamily. As to expression, expressed in testis, kidney, lung and brain.

It is found in the cytoplasm. The protein resides in the nucleus. The enzyme catalyses L-seryl-[protein] + ATP = O-phospho-L-seryl-[protein] + ADP + H(+). It catalyses the reaction L-threonyl-[protein] + ATP = O-phospho-L-threonyl-[protein] + ADP + H(+). The protein is Cyclin-dependent kinase-like 2 of Mus musculus (Mouse).